The sequence spans 202 residues: ATP-dependent Clp protease proteolytic subunit (202 aa).

The active-site Nucleophile is the serine 98. The active site involves histidine 123.

This sequence belongs to the peptidase S14 family. Fourteen ClpP subunits assemble into 2 heptameric rings which stack back to back to give a disk-like structure with a central cavity, resembling the structure of eukaryotic proteasomes.

It localises to the cytoplasm. The enzyme catalyses Hydrolysis of proteins to small peptides in the presence of ATP and magnesium. alpha-casein is the usual test substrate. In the absence of ATP, only oligopeptides shorter than five residues are hydrolyzed (such as succinyl-Leu-Tyr-|-NHMec, and Leu-Tyr-Leu-|-Tyr-Trp, in which cleavage of the -Tyr-|-Leu- and -Tyr-|-Trp bonds also occurs).. In terms of biological role, cleaves peptides in various proteins in a process that requires ATP hydrolysis. Has a chymotrypsin-like activity. Plays a major role in the degradation of misfolded proteins. In Syntrophobacter fumaroxidans (strain DSM 10017 / MPOB), this protein is ATP-dependent Clp protease proteolytic subunit.